Consider the following 138-residue polypeptide: Molluscan insulin-related peptide 5 (138 aa).

An N-terminal signal peptide occupies residues 1–31; it reads MAGVRLVFTKAFMVTVLLTLLLNIGVKPAEG. Q32 bears the Pyrrolidone carboxylic acid mark. Cystine bridges form between C48–C124, C60–C137, and C123–C128. The propeptide at 72 to 84 is C-beta peptide like; the sequence is DAETGWLLPETMV. Positions 87 to 111 are cleaved as a propeptide — C-alpha peptide like; that stretch reads NAQTDLDDPLRNIKLSSESALTYLT. Q114 carries the post-translational modification Pyrrolidone carboxylic acid.

The protein belongs to the insulin family. As to quaternary structure, heterodimer of a B chain and an A chain linked by two disulfide bonds. Expressed in the cerebral light-green cells which are giant neuroendocrines cells involved in the control of growth.

The protein localises to the cytoplasmic vesicle. It is found in the secretory vesicle. This is Molluscan insulin-related peptide 5 from Lymnaea stagnalis (Great pond snail).